A 65-amino-acid chain; its full sequence is Large ribosomal subunit protein bL35 (65 aa).

The disordered stretch occupies residues 1-26 (MPKMKTHRGAAKRFKKTGSGKLKRAK).

This sequence belongs to the bacterial ribosomal protein bL35 family.

This is Large ribosomal subunit protein bL35 from Clostridium novyi (strain NT).